A 437-amino-acid polypeptide reads, in one-letter code: Aspartic proteinase CDR1 (437 aa).

The signal sequence occupies residues 1–25 (MASLFSSVLLSLCLLSSLFLSNANA). A propeptide spans 26–73 (KPKLGFTADLIHRDSPKSPFYNPMETSSQRLRNAIHRSVNRVFHFTEK) (activation peptide). The 341-residue stretch at 90 to 430 (YLMNVSIGTP…DTVSKTVSFK (341 aa)) folds into the Peptidase A1 domain. N-linked (GlcNAc...) asparagine glycosylation is present at Asn-93. Residues Asp-108 and Asp-319 contribute to the active site.

The protein belongs to the peptidase A1 family.

Its subcellular location is the secreted. The protein localises to the extracellular space. It localises to the apoplast. In terms of biological role, involved in salicylic acid-dependent inducible resistance responses. May release an endogenous peptide elicitor required for the activation of inducible resistance mechanisms. Possesses protease activity in vitro. This is Aspartic proteinase CDR1 (CDR1) from Arabidopsis thaliana (Mouse-ear cress).